Here is a 2969-residue protein sequence, read N- to C-terminus: MDPRNTAMLGLGSDSEGFSRKSPSAISTGTLVSKREVELEKNTKEEEDLRKRNRERNIEAGKDDGLTDAQQQFSVKETNFSEGNLKLKIGLQAKRTKKPPKNLENYVCRPAIKTTIKHPRKALKSGKMTDEKNEHCPSKRDPSKLYKKADDVAAIECQSEEVIRLHSQGENNPLSKKLSPVHSEMADYINATPSTLLGSRDPDLKDRALLNGGTSVTEKLAQLIATCPPSKSSKTKPKKLGTGTTAGLVSKDLIRKAGVGSVAGIIHKDLIKKPTISTAVGLVTKDPGKKPVFNAAVGLVNKDSVKKLGTGTTAVFINKNLGKKPGTITTVGLLSKDSGKKLGIGIVPGLVHKESGKKLGLGTVVGLVNKDLGKKLGSTVGLVAKDCAKKIVASSAMGLVNKDIGKKLMSCPLAGLISKDAINLKAEALLPTQEPLKASCSTNINNQESQELSESLKDSATSKTFEKNVVRQNKESILEKFSVRKEIINLEKEMFNEGTCIQQDSFSSSEKGSYETSKHEKQPPVYCTSPDFKMGGASDVSTAKSPFSAVGESNLPSPSPTVSVNPLTRSPPETSSQLAPNPLLLSSTTELIEEISESVGKNQFTSESTHLNVGHRSVGHSISIECKGIDKEVNDSKTTHIDIPRISSSLGKKPSLTSESSIHTITPSVVNFTSLFSNKPFLKLGAVSASDKHCQVAESLSTSLQSKPLKKRKGRKPRWTKVVARSTCRSPKGLELERSELFKNVSCSSLSNSNSEPAKFMKNIGPPSFVDHDFLKRRLPKLSKSTAPSLALLADSEKPSHKSFATHKLSSSMCVSSDLLSDIYKPKRGRPKSKEMPQLEGPPKRTLKIPASKVFSLQSKEEQEPPILQPEIEIPSFKQGLSVSPFPKKRGRPKRQMRSPVKMKPPVLSVAPFVATESPSKLESESDNHRSSSDFFESEDQLQDPDDLDDSHRPSVCSMSDLEMEPDKKITKRNNGQLMKTIIRKINKMKTLKRKKLLNQILSSSVESSNKGKVQSKLHNTVSSLAATFGSKLGQQINVSKKGTIYIGKRRGRKPKTVLNGILSGSPTSLAVLEQTAQQAAGSALGQILPPLLPSSASSSEILPSPICSQSSGTSGGQSPVSSDAGFVEPSSVPYLHLHSRQGSMIQTLAMKKASKGRRRLSPPTLLPNSPSHLSELTSLKEATPSPISESHSDETIPSDSGIGTDNNSTSDRAEKFCGQKKRRHSFEHVSLIPPETSTVLSSLKEKHKHKCKRRNHDYLSYDKMKRQKRKRKKKYPQLRNRQDPDFIAELEELISRLSEIRITHRSHHFIPRDLLPTIFRINFNSFYTHPSFPLDPLHYIRKPDLKKKRGRPPKMREAMAEMPFMHSLSFPLSSTGFYPSYGMPYSPSPLTAAPIGLGYYGRYPPTLYPPPPSPSFTTPLPPPSYMHAGHLLLNPAKYHKKKHKLLRQEAFLTTSRTPLLSMSTYPSVPPEMAYGWMVEHKHRHRHKHREHRSSEQPQVSMDTGSSRSVLESLKRYRFGKDAVGERYKHKEKHRCHMSCPHLSPSKSLINREEQWVHREPSESSPLALGLQTPLQIDCSESSPSLSLGGFTPNSEPASSDEHTNLFTSAIGSCRVSNPNSSGRKKLTDSPGLFSAQDTSLNRLHRKESLPSNERAVQTLAGSQPTSDKPSQRPSESTNCSPTRKRSSSESTSSTVNGVPSRSPRLVASGDDSVDSLLQRMVQNEDQEPMEKSIDAVIATASAPPSSSPGRSHSKDRTLGKPDSLLVPAVTSDSCNNSISLLSEKLTSSCSPHHIKRSVVEAMQRQARKMCNYDKILATKKNLDHVNKILKAKKLQRQARTGNNFVKRRPGRPRKCPLQAVVSMQAFQAAQFVNPELNRDEEGAALHLSPDTVTDVIEAVVQSVNLNPEHKKGLKRKGWLLEEQTRKKQKPLPEEEEQENNKSFNEAPVEIPSPSETPAKPSEPESTLQPVLSLIPREKKPPRPPKKKYQKAGLYSDVYKTTDPKSRLIQLKKEKLEYTPGEHEYGLFPAPIHVVFFVSGKYLRQKRIDFQLPYDILWQWKHNQLYKKPDVPLYKKIRSNVYVDVKPLSGYEATTCNCKKPDDDTRKGCVDDCLNRMIFAECSPNTCPCGEQCCNQRIQRHEWVQCLERFRAEEKGWGIRTKEPLKAGQFIIEYLGEVVSEQEFRNRMIEQYHNHSDHYCLNLDSGMVIDSYRMGNEARFINHSCDPNCEMQKWSVNGVYRIGLYALKDMPAGTELTYDYNFHSFNVEKQQLCKCGFEKCRGIIGGKSQRVNGLTSSKNSQPMATHKKSGRSKEKRKSKHKLKKRRGHLSEEPSENINTPTRLTPQLQMKPMSNRERNFVLKHHVFLVRNWEKIRQKQEEVKHTSDNIHSASLYTRWNGICRDDGNIKSDVFMTQFSALQTARSVRTRRLAAAEENIEVARAARLAQIFKEICDGIISYKDSSRQALAAPLLNLPPKKKNADYYEKISDPLDLITIEKQILTGYYKTVEAFDADMLKVFRNAEKYYGRKSPVGRDVCRLRKAYYNARHEASAQIDEIVGETASEADSSETSVSEKENGHEKDDDVIRCICGLYKDEGLMIQCDKCMVWQHCDCMGVNSDVEHYLCEQCDPRPVDREVPMIPRPHYAQPGCVYFICLLRDDLLLRQGDCVYLMRDSRRTPDGHPVRQSYRLLSHINRDKLDIFRIEKLWKNEKEERFAFGHHYFRPHETHHSPSRRFYHNELFRVPLYEIIPLEAVVGTCCVLDLYTYCKGRPKGVKEQDVYICDYRLDKSAHLFYKIHRNRYPVCTKPYAFDHFPKKLTPKKDFSPHYVPDNYKRNGGRSSWKSERSKPPLKDLGQEDDALPLIEEVLASQEQAANEIPSLEEPEREGATANVSEGEKKTEESSQEPQSTCTPEERRHNQRERLNQILLNLLEKIPGKNAIDVTYLLEEGSGRKLRRRTLFIPENSFRK.

Disordered regions lie at residues 1 to 70 (MDPR…TDAQ) and 118 to 143 (HPRK…RDPS). Polar residues predominate over residues 21–31 (KSPSAISTGTL). A Phosphoserine modification is found at serine 22. Basic and acidic residues-rich tracts occupy residues 33–65 (SKRE…KDDG) and 127–143 (KMTD…RDPS). A Glycyl lysine isopeptide (Lys-Gly) (interchain with G-Cter in SUMO2) cross-link involves residue lysine 34. Lysine 375 bears the N6-acetyllysine mark. Lysine 425 participates in a covalent cross-link: Glycyl lysine isopeptide (Lys-Gly) (interchain with G-Cter in SUMO2). A compositionally biased stretch (polar residues) spans 501-511 (IQQDSFSSSEK). Disordered regions lie at residues 501–525 (IQQD…QPPV), 537–583 (ASDV…PNPL), 824–845 (YKPK…PPKR), 878–966 (KQGL…EMEP), 1100–1128 (SEIL…AGFV), 1151–1231 (MKKA…EHVS), and 1243–1281 (SLKE…QLRN). The segment covering 512–522 (GSYETSKHEKQ) has biased composition (basic and acidic residues). Polar residues predominate over residues 554-579 (NLPSPSPTVSVNPLTRSPPETSSQLA). A compositionally biased stretch (basic residues) spans 887–897 (PKKRGRPKRQM). Residues 887 to 899 (PKKRGRPKRQMRS) constitute a DNA-binding region (a.T hook 1). A compositionally biased stretch (basic and acidic residues) spans 920–932 (SKLESESDNHRSS). Over residues 936 to 949 (FESEDQLQDPDDLD) the composition is skewed to acidic residues. Low complexity-rich tracts occupy residues 1100–1123 (SEIL…PVSS) and 1162–1175 (SPPT…SHLS). Phosphoserine occurs at positions 1162 and 1170. Polar residues predominate over residues 1186-1211 (SPISESHSDETIPSDSGIGTDNNSTS). Residue glutamine 1220 is modified to N5-methylglutamine. 2 stretches are compositionally biased toward basic residues: residues 1246 to 1256 (EKHKHKCKRRN) and 1266 to 1277 (KRQKRKRKKKYP). The a.T hook 2 DNA-binding region spans 1347 to 1359 (KKKRGRPPKMREA). Disordered stretches follow at residues 1489–1508 (HREH…GSSR), 1580–1711 (SESS…ASGD), and 1741–1761 (ASAP…TLGK). 4 stretches are compositionally biased toward polar residues: residues 1496 to 1508 (EQPQ…GSSR), 1580 to 1598 (SESS…SEPA), 1605 to 1622 (NLFT…PNSS), and 1650 to 1680 (LPSN…STNC). Residues 1741 to 1751 (ASAPPSSSPGR) are compositionally biased toward low complexity. The segment at residues 1847-1859 (KRRPGRPRKCPLQ) is a DNA-binding region (a.T hook 3). The tract at residues 1911 to 1991 (KKGLKRKGWL…PRPPKKKYQK (81 aa)) is disordered. Residues 2069-2288 (PDVPLYKKIR…KCRGIIGGKS (220 aa)) form a catalytic domain region. The region spanning 2091 to 2142 (YEATTCNCKKPDDDTRKGCVDDCLNRMIFAECSPNTCPCGEQCCNQRIQRHE) is the AWS domain. Residues 2145–2261 (QCLERFRAEE…AGTELTYDYN (117 aa)) enclose the SET domain. Positions 2269–2285 (KQQLCKCGFEKCRGIIG) constitute a Post-SET domain. The interval 2288-2346 (SQRVNGLTSSKNSQPMATHKKSGRSKEKRKSKHKLKKRRGHLSEEPSENINTPTRLTPQ) is disordered. Residues 2289-2303 (QRVNGLTSSKNSQPM) are compositionally biased toward polar residues. Positions 2305–2327 (THKKSGRSKEKRKSKHKLKKRRG) are enriched in basic residues. Lysine 2317, lysine 2319, and lysine 2323 each carry N6-acetyllysine. The span at 2335–2346 (ENINTPTRLTPQ) shows a compositional bias: polar residues. Residues 2444-2550 (RLAQIFKEIC…KAYYNARHEA (107 aa)) enclose the Bromo domain. The segment at 2585–2631 (VIRCICGLYKDEGLMIQCDKCMVWQHCDCMGVNSDVEHYLCEQCDPR) adopts a PHD-type zinc-finger fold. The BAH domain maps to 2661-2798 (LLLRQGDCVY…KSAHLFYKIH (138 aa)). 2 disordered regions span residues 2825-2856 (SPHY…DLGQ) and 2876-2919 (NEIP…RRHN). A compositionally biased stretch (basic and acidic residues) spans 2842–2855 (WKSERSKPPLKDLG).

It belongs to the class V-like SAM-binding methyltransferase superfamily. Histone-lysine methyltransferase family. SET2 subfamily. Post-translationally, methylated at Gln-1220 by N6AMT1. Widely expressed, with highest level in brain, heart and kidney.

It is found in the nucleus. Its subcellular location is the cell junction. The protein resides in the tight junction. The protein localises to the chromosome. The enzyme catalyses L-lysyl(36)-[histone H3] + 3 S-adenosyl-L-methionine = N(6),N(6),N(6)-trimethyl-L-lysyl(36)-[histone H3] + 3 S-adenosyl-L-homocysteine + 3 H(+). It carries out the reaction L-lysyl(9)-[histone H3] + S-adenosyl-L-methionine = N(6)-methyl-L-lysyl(9)-[histone H3] + S-adenosyl-L-homocysteine + H(+). Functionally, histone methyltransferase specifically trimethylating 'Lys-36' of histone H3 forming H3K36me3. Also monomethylates 'Lys-9' of histone H3 (H3K9me1) in vitro. The physiological significance of the H3K9me1 activity is unclear. The sequence is that of Histone-lysine N-methyltransferase ASH1L (ASH1L) from Homo sapiens (Human).